A 388-amino-acid chain; its full sequence is Galactokinase (388 aa).

Substrate is bound at residue 33–36; that stretch reads EHTD. ATP is bound by residues Ser67 and 125-131; that span reads GAGLSSS. 2 residues coordinate Mg(2+): Ser131 and Glu163. Asp175 acts as the Proton acceptor in catalysis. Tyr225 provides a ligand contact to substrate.

The protein belongs to the GHMP kinase family. GalK subfamily.

It localises to the cytoplasm. The enzyme catalyses alpha-D-galactose + ATP = alpha-D-galactose 1-phosphate + ADP + H(+). Its pathway is carbohydrate metabolism; galactose metabolism. Its function is as follows. Catalyzes the transfer of the gamma-phosphate of ATP to D-galactose to form alpha-D-galactose-1-phosphate (Gal-1-P). The polypeptide is Galactokinase (Limosilactobacillus fermentum (strain NBRC 3956 / LMG 18251) (Lactobacillus fermentum)).